Consider the following 452-residue polypeptide: Elongation factor Tu, mitochondrial (452 aa).

Residues 1–43 (MAAATLLRATPLFSGLGAGPAPLLQGLLRPLKAQALPVLCRGL) constitute a mitochondrion transit peptide. The 197-residue stretch at 55 to 251 (KPHVNVGTIG…AVDTYIPVPT (197 aa)) folds into the tr-type G domain. The segment at 64–71 (GHVDHGKT) is G1. GTP contacts are provided by aspartate 67, glycine 69, lysine 70, threonine 71, and threonine 72. Position 71 (threonine 71) interacts with Mg(2+). The residue at position 79 (lysine 79) is an N6-acetyllysine. The residue at position 88 (lysine 88) is an N6-acetyllysine; alternate. The residue at position 88 (lysine 88) is an N6-succinyllysine; alternate. The segment at 105-109 (GITIN) is G2. A G3 region spans residues 126-129 (DCPG). GTP contacts are provided by asparagine 181, aspartate 184, serine 219, alanine 220, and leucine 221. The interval 181–184 (NKAD) is G4. A G5 region spans residues 219–221 (SAL). An N6-succinyllysine modification is found at lysine 234. Lysine 256 carries the post-translational modification N6-acetyllysine. Threonine 278 carries the post-translational modification Phosphothreonine. Lysine 286 carries the post-translational modification N6-succinyllysine. A Phosphoserine modification is found at serine 312. 2 positions are modified to N6-acetyllysine: lysine 361 and lysine 418.

This sequence belongs to the TRAFAC class translation factor GTPase superfamily. Classic translation factor GTPase family. EF-Tu/EF-1A subfamily. Interacts with NLRX1. Interacts with ATG16L1.

The protein resides in the mitochondrion. The catalysed reaction is GTP + H2O = GDP + phosphate + H(+). Its function is as follows. GTP hydrolase that promotes the GTP-dependent binding of aminoacyl-tRNA to the A-site of ribosomes during protein biosynthesis. Also plays a role in the regulation of autophagy and innate immunity. Recruits ATG5-ATG12 and NLRX1 at mitochondria and serves as a checkpoint of the RIGI-MAVS pathway. In turn, inhibits RLR-mediated type I interferon while promoting autophagy. This is Elongation factor Tu, mitochondrial (TUFM) from Bos taurus (Bovine).